Reading from the N-terminus, the 624-residue chain is Chromosomal replication initiator protein DnaA (624 aa).

Residues Met-1–Ala-99 are domain I, interacts with DnaA modulators. The disordered stretch occupies residues Asp-88–Arg-284. The interval Pro-100–Ala-283 is domain II. A compositionally biased stretch (low complexity) spans Met-102 to His-112. 2 stretches are compositionally biased toward basic and acidic residues: residues Gln-118 to Pro-141 and Gly-176 to Ala-206. Residues Pro-250–Val-264 are compositionally biased toward gly residues. Positions Arg-284 to Ala-500 are domain III, AAA+ region. ATP is bound by residues Gly-328, Gly-330, Lys-331, and Thr-332. The interval Ser-501 to Gly-624 is domain IV, binds dsDNA.

The protein belongs to the DnaA family. In terms of assembly, oligomerizes as a right-handed, spiral filament on DNA at oriC.

Its subcellular location is the cytoplasm. In terms of biological role, plays an essential role in the initiation and regulation of chromosomal replication. ATP-DnaA binds to the origin of replication (oriC) to initiate formation of the DNA replication initiation complex once per cell cycle. Binds the DnaA box (a 9 base pair repeat at the origin) and separates the double-stranded (ds)DNA. Forms a right-handed helical filament on oriC DNA; dsDNA binds to the exterior of the filament while single-stranded (ss)DNA is stabiized in the filament's interior. The ATP-DnaA-oriC complex binds and stabilizes one strand of the AT-rich DNA unwinding element (DUE), permitting loading of DNA polymerase. After initiation quickly degrades to an ADP-DnaA complex that is not apt for DNA replication. Binds acidic phospholipids. Functionally, the DnaA box consensus is 5'-(T/C)(T/C)(G/AC)TCCACA-3'. The polypeptide is Chromosomal replication initiator protein DnaA (Streptomyces anulatus (Streptomyces chrysomallus)).